We begin with the raw amino-acid sequence, 224 residues long: Glycerol-3-phosphate acyltransferase (224 aa).

Transmembrane regions (helical) follow at residues 3-23 (IFLSIAINILIFWIGYLIGSL), 54-74 (VFGYKVAIVILFIDIFKVVFA), 90-112 (LYFYIPLIAGLAAQIGQAYPIYF), 127-147 (LISINVLLWPIAGVFFFLLLF), 152-172 (VSLSSLLTTLIMIGFISIPWM), and 183-203 (GFGQFWVNIIIYLFAAALIFW).

It belongs to the PlsY family. Probably interacts with PlsX.

It is found in the cell membrane. It catalyses the reaction an acyl phosphate + sn-glycerol 3-phosphate = a 1-acyl-sn-glycero-3-phosphate + phosphate. It functions in the pathway lipid metabolism; phospholipid metabolism. Catalyzes the transfer of an acyl group from acyl-phosphate (acyl-PO(4)) to glycerol-3-phosphate (G3P) to form lysophosphatidic acid (LPA). This enzyme utilizes acyl-phosphate as fatty acyl donor, but not acyl-CoA or acyl-ACP. This chain is Glycerol-3-phosphate acyltransferase, found in Mycoplasmopsis synoviae (strain 53) (Mycoplasma synoviae).